A 234-amino-acid chain; its full sequence is Large ribosomal subunit protein uL1 (234 aa).

Belongs to the universal ribosomal protein uL1 family. Part of the 50S ribosomal subunit.

Its function is as follows. Binds directly to 23S rRNA. The L1 stalk is quite mobile in the ribosome, and is involved in E site tRNA release. Protein L1 is also a translational repressor protein, it controls the translation of the L11 operon by binding to its mRNA. The polypeptide is Large ribosomal subunit protein uL1 (Klebsiella pneumoniae (strain 342)).